A 182-amino-acid polypeptide reads, in one-letter code: ATP synthase subunit delta, organellar chromatophore (182 aa).

It belongs to the ATPase delta chain family. As to quaternary structure, F-type ATPases have 2 components, F(1) - the catalytic core - and F(0) - the membrane proton channel. F(1) has five subunits: alpha(3), beta(3), gamma(1), delta(1), epsilon(1). CF(0) has four main subunits: a(1), b(1), b'(1) and c(10-14). The alpha and beta chains form an alternating ring which encloses part of the gamma chain. F(1) is attached to F(0) by a central stalk formed by the gamma and epsilon chains, while a peripheral stalk is formed by the delta, b and b' chains.

It is found in the plastid. It localises to the organellar chromatophore thylakoid membrane. In terms of biological role, f(1)F(0) ATP synthase produces ATP from ADP in the presence of a proton or sodium gradient. F-type ATPases consist of two structural domains, F(1) containing the extramembraneous catalytic core and F(0) containing the membrane proton channel, linked together by a central stalk and a peripheral stalk. During catalysis, ATP synthesis in the catalytic domain of F(1) is coupled via a rotary mechanism of the central stalk subunits to proton translocation. This protein is part of the stalk that links CF(0) to CF(1). It either transmits conformational changes from CF(0) to CF(1) or is implicated in proton conduction. In Paulinella chromatophora, this protein is ATP synthase subunit delta, organellar chromatophore.